The primary structure comprises 257 residues: Deoxyribose-phosphate aldolase (257 aa).

The active-site Proton donor/acceptor is Asp-102. Lys-165 serves as the catalytic Schiff-base intermediate with acetaldehyde. The Proton donor/acceptor role is filled by Lys-199.

This sequence belongs to the DeoC/FbaB aldolase family. DeoC type 2 subfamily.

Its subcellular location is the cytoplasm. The enzyme catalyses 2-deoxy-D-ribose 5-phosphate = D-glyceraldehyde 3-phosphate + acetaldehyde. The protein operates within carbohydrate degradation; 2-deoxy-D-ribose 1-phosphate degradation; D-glyceraldehyde 3-phosphate and acetaldehyde from 2-deoxy-alpha-D-ribose 1-phosphate: step 2/2. Functionally, catalyzes a reversible aldol reaction between acetaldehyde and D-glyceraldehyde 3-phosphate to generate 2-deoxy-D-ribose 5-phosphate. The protein is Deoxyribose-phosphate aldolase of Photobacterium profundum (strain SS9).